Here is a 239-residue protein sequence, read N- to C-terminus: UDP-2,3-diacylglucosamine hydrolase (239 aa).

The Mn(2+) site is built by D9, H11, D42, N80, and H115. Residue 80 to 81 (NR) participates in substrate binding. Residues D123, S161, K165, K168, and H196 each coordinate substrate. Mn(2+)-binding residues include H196 and H198.

Belongs to the LpxH family. Requires Mn(2+) as cofactor.

It localises to the cell inner membrane. It catalyses the reaction UDP-2-N,3-O-bis[(3R)-3-hydroxytetradecanoyl]-alpha-D-glucosamine + H2O = 2-N,3-O-bis[(3R)-3-hydroxytetradecanoyl]-alpha-D-glucosaminyl 1-phosphate + UMP + 2 H(+). Its pathway is glycolipid biosynthesis; lipid IV(A) biosynthesis; lipid IV(A) from (3R)-3-hydroxytetradecanoyl-[acyl-carrier-protein] and UDP-N-acetyl-alpha-D-glucosamine: step 4/6. Hydrolyzes the pyrophosphate bond of UDP-2,3-diacylglucosamine to yield 2,3-diacylglucosamine 1-phosphate (lipid X) and UMP by catalyzing the attack of water at the alpha-P atom. Involved in the biosynthesis of lipid A, a phosphorylated glycolipid that anchors the lipopolysaccharide to the outer membrane of the cell. The polypeptide is UDP-2,3-diacylglucosamine hydrolase (Pasteurella multocida (strain Pm70)).